The primary structure comprises 67 residues: LPS-assembly lipoprotein LptM (67 aa).

The N-terminal stretch at 1 to 19 (MKNVFKTLAVLLTLFSLTG) is a signal peptide. Residue C20 is the site of N-palmitoyl cysteine attachment. Residue C20 is the site of S-diacylglycerol cysteine attachment. A disordered region spans residues 26-67 (LYFPPADKNAPPPTKKVDSQTQSTMPDKNDRATGDGPSQVNY).

Belongs to the LptM family. Interacts with the outer membrane embedded portion of the LPS translocon formed by LptD and LptE (LptDE).

The protein resides in the cell outer membrane. Component of the lipopolysaccharide (LPS) transport (Lpt) pathway that promotes efficient assembly of the outer membrane LPS translocon (LptDE) by the BAM complex. Facilitates oxidative maturation of LptD by stabilizing a conformation of the LPS translocon in which LptD can efficiently acquire native disulfide bonds, thereby activating the LPS translocon. The protein is LPS-assembly lipoprotein LptM of Salmonella typhi.